The following is a 288-amino-acid chain: Nucleotide-binding protein APP7_0339 (288 aa).

8-15 (GRSGSGKS) provides a ligand contact to ATP. Position 56-59 (56-59 (DIRN)) interacts with GTP.

It belongs to the RapZ-like family.

In terms of biological role, displays ATPase and GTPase activities. The protein is Nucleotide-binding protein APP7_0339 of Actinobacillus pleuropneumoniae serotype 7 (strain AP76).